Reading from the N-terminus, the 305-residue chain is tRNA pseudouridine synthase B (305 aa).

Residue Asp39 is the Nucleophile of the active site.

The protein belongs to the pseudouridine synthase TruB family. Type 1 subfamily.

It carries out the reaction uridine(55) in tRNA = pseudouridine(55) in tRNA. Responsible for synthesis of pseudouridine from uracil-55 in the psi GC loop of transfer RNAs. The protein is tRNA pseudouridine synthase B of Staphylococcus aureus (strain MRSA252).